A 511-amino-acid polypeptide reads, in one-letter code: Putative thymidine phosphorylase 1 (511 aa).

This sequence belongs to the thymidine/pyrimidine-nucleoside phosphorylase family. Type 2 subfamily.

It catalyses the reaction thymidine + phosphate = 2-deoxy-alpha-D-ribose 1-phosphate + thymine. This Acidovorax sp. (strain JS42) protein is Putative thymidine phosphorylase 1.